Here is a 1403-residue protein sequence, read N- to C-terminus: Centrosomal protein of 162 kDa (1403 aa).

The interval 20-46 (LSDDSFENSNKTPRQPNEDNKEMKKKD) is disordered. Over residues 35-46 (PNEDNKEMKKKD) the composition is skewed to basic and acidic residues. Residues S160 and S163 each carry the phosphoserine modification. 4 disordered regions span residues 169–243 (LHRY…MLAN), 256–292 (VGLS…SSGD), 306–348 (SLGD…ESDL), and 453–606 (NPSL…GGNR). Residues 178 to 208 (PAEDGCENESEQEELPETYSDDFEDAEDADD) show a composition bias toward acidic residues. Residues 210–238 (LITKDEETHPKENSESGKDSFPKQEEEKT) show a composition bias toward basic and acidic residues. Over residues 485 to 500 (PCKKARSTPSLPKRKP) the composition is skewed to basic residues. Basic and acidic residues-rich tracts occupy residues 526 to 536 (LEKKTSKDNTK) and 571 to 585 (PHRE…RPED). A coiled-coil region spans residues 614–1124 (KRAQDAEEKW…QKERRMMLSR (511 aa)). Residues 1126 to 1147 (IPRSREETAAKRLKKDPNRGHG) are disordered. Positions 1128–1144 (RSREETAAKRLKKDPNR) are enriched in basic and acidic residues. Residues 1174-1386 (EENYRLRSEL…LDVLRELHRQ (213 aa)) adopt a coiled-coil conformation.

The protein belongs to the CEP162 family. As to quaternary structure, interacts with CPNE4. Interacts with alpha-tubulin. Interacts with CEP290.

Its subcellular location is the cytoplasm. It localises to the cytoskeleton. The protein resides in the microtubule organizing center. It is found in the centrosome. The protein localises to the centriole. Its subcellular location is the spindle. It localises to the nucleus. Functionally, required to promote assembly of the transition zone in primary cilia. Acts by specifically recognizing and binding the axonemal microtubule. Localizes to the distal ends of centrioles before ciliogenesis and directly binds to axonemal microtubule, thereby promoting and restricting transition zone formation specifically at the cilia base. Required to mediate CEP290 association with microtubules. The polypeptide is Centrosomal protein of 162 kDa (Cep162) (Mus musculus (Mouse)).